A 248-amino-acid chain; its full sequence is NH(3)-dependent NAD(+) synthetase (248 aa).

31–38 is a binding site for ATP; that stretch reads GLSGGVDS. D37 lines the Mg(2+) pocket. Residue R114 participates in deamido-NAD(+) binding. T134 is an ATP binding site. E139 provides a ligand contact to Mg(2+). Residues K147 and D154 each contribute to the deamido-NAD(+) site. Residues K163 and T185 each coordinate ATP. 232–233 serves as a coordination point for deamido-NAD(+); sequence HK.

The protein belongs to the NAD synthetase family. Homodimer.

The enzyme catalyses deamido-NAD(+) + NH4(+) + ATP = AMP + diphosphate + NAD(+) + H(+). It functions in the pathway cofactor biosynthesis; NAD(+) biosynthesis; NAD(+) from deamido-NAD(+) (ammonia route): step 1/1. Functionally, catalyzes the ATP-dependent amidation of deamido-NAD to form NAD. Uses ammonia as a nitrogen source. The protein is NH(3)-dependent NAD(+) synthetase of Mycoplasma pneumoniae (strain ATCC 29342 / M129 / Subtype 1) (Mycoplasmoides pneumoniae).